We begin with the raw amino-acid sequence, 60 residues long: Short neurotoxin 1 (60 aa).

4 disulfides stabilise this stretch: Cys-3-Cys-22, Cys-17-Cys-39, Cys-41-Cys-52, and Cys-53-Cys-58.

It belongs to the three-finger toxin family. Short-chain subfamily. Type I alpha-neurotoxin sub-subfamily. Expressed by the venom gland.

Its subcellular location is the secreted. Binds to muscle nicotinic acetylcholine receptor (nAChR) and inhibit acetylcholine from binding to the receptor, thereby impairing neuromuscular transmission. In Hydrophis cyanocinctus (Asian annulated sea snake), this protein is Short neurotoxin 1.